Here is a 535-residue protein sequence, read N- to C-terminus: Phosphoenolpyruvate carboxykinase (ATP) (535 aa).

Residues Arg59, Tyr201, and Lys207 each coordinate substrate. Residues Lys207, His226, and 243 to 251 (GLSGTGKTT) each bind ATP. Residues Lys207 and His226 each contribute to the Mn(2+) site. Asp264 contacts Mn(2+). ATP-binding positions include Glu292, Arg328, 444-445 (RI), and Thr450. Residue Arg328 participates in substrate binding.

Belongs to the phosphoenolpyruvate carboxykinase (ATP) family. Requires Mn(2+) as cofactor.

It is found in the cytoplasm. The catalysed reaction is oxaloacetate + ATP = phosphoenolpyruvate + ADP + CO2. It functions in the pathway carbohydrate biosynthesis; gluconeogenesis. Involved in the gluconeogenesis. Catalyzes the conversion of oxaloacetate (OAA) to phosphoenolpyruvate (PEP) through direct phosphoryl transfer between the nucleoside triphosphate and OAA. The sequence is that of Phosphoenolpyruvate carboxykinase (ATP) from Bacteroides thetaiotaomicron (strain ATCC 29148 / DSM 2079 / JCM 5827 / CCUG 10774 / NCTC 10582 / VPI-5482 / E50).